A 576-amino-acid polypeptide reads, in one-letter code: 2-succinyl-5-enolpyruvyl-6-hydroxy-3-cyclohexene-1-carboxylate synthase (576 aa).

The protein belongs to the TPP enzyme family. MenD subfamily. As to quaternary structure, homodimer. The cofactor is Mg(2+). Mn(2+) is required as a cofactor. Thiamine diphosphate serves as cofactor.

The enzyme catalyses isochorismate + 2-oxoglutarate + H(+) = 5-enolpyruvoyl-6-hydroxy-2-succinyl-cyclohex-3-ene-1-carboxylate + CO2. Its pathway is quinol/quinone metabolism; 1,4-dihydroxy-2-naphthoate biosynthesis; 1,4-dihydroxy-2-naphthoate from chorismate: step 2/7. The protein operates within quinol/quinone metabolism; menaquinone biosynthesis. In terms of biological role, catalyzes the thiamine diphosphate-dependent decarboxylation of 2-oxoglutarate and the subsequent addition of the resulting succinic semialdehyde-thiamine pyrophosphate anion to isochorismate to yield 2-succinyl-5-enolpyruvyl-6-hydroxy-3-cyclohexene-1-carboxylate (SEPHCHC). In Aliivibrio fischeri (strain ATCC 700601 / ES114) (Vibrio fischeri), this protein is 2-succinyl-5-enolpyruvyl-6-hydroxy-3-cyclohexene-1-carboxylate synthase.